The primary structure comprises 458 residues: ATP synthase subunit beta (458 aa).

148–155 serves as a coordination point for ATP; sequence GGAGVGKT.

The protein belongs to the ATPase alpha/beta chains family. In terms of assembly, F-type ATPases have 2 components, CF(1) - the catalytic core - and CF(0) - the membrane proton channel. CF(1) has five subunits: alpha(3), beta(3), gamma(1), delta(1), epsilon(1). CF(0) has three main subunits: a(1), b(2) and c(9-12). The alpha and beta chains form an alternating ring which encloses part of the gamma chain. CF(1) is attached to CF(0) by a central stalk formed by the gamma and epsilon chains, while a peripheral stalk is formed by the delta and b chains.

Its subcellular location is the cell inner membrane. The enzyme catalyses ATP + H2O + 4 H(+)(in) = ADP + phosphate + 5 H(+)(out). In terms of biological role, produces ATP from ADP in the presence of a proton gradient across the membrane. The catalytic sites are hosted primarily by the beta subunits. This chain is ATP synthase subunit beta, found in Francisella tularensis subsp. holarctica (strain FTNF002-00 / FTA).